A 454-amino-acid polypeptide reads, in one-letter code: MINILEVNETNNMIEQEKLDVRTITLGISLLDCCDASLDTLNQKIYAKITRLARNLVSTGREIELEYGIPIVNKRISVTPIALIAGSACQSPEDFVSIAQTLDKAAADMGVNFIGGYSAIVSKGMTWTDELLIRSIPHALSATERVCSSVNIGSTKTGINMDAVRLMGQIIKETAEATQEQNSLGCAKLVVFCNAPDDNPFMAGAFHGISEADAVIHVGVSGPGVVKHALESVRGKDFEVLCETVKKTAFKVTRVGQLVAQVASERLGVPFGIVDLSLAPTPSVGDSVAEILEEMGLESVGAPGTTAALALLNDQVKKGGVMASSFVGGLSGAFIPVSEDQGMIDAVIRGSLTIEKLEAMTCVCSVGLDMIAIPGSTPASTISGIIADEAAIGMINQKTTAVRLIPVIGKDVGDMVEFGGLLGHAPVQQVNTFDCSKFINRGGRIPAPIHSFRN.

This sequence belongs to the UPF0210 family.

The chain is UPF0210 protein Mhun_2657 from Methanospirillum hungatei JF-1 (strain ATCC 27890 / DSM 864 / NBRC 100397 / JF-1).